A 456-amino-acid polypeptide reads, in one-letter code: Bifunctional protein GlmU (456 aa).

Positions 1–230 are pyrophosphorylase; it reads MDKRFAVVLA…FQETLGVNDR (230 aa). Residues 9 to 12, lysine 23, glutamine 73, and 78 to 79 each bind UDP-N-acetyl-alpha-D-glucosamine; these read LAAG and GT. Residue aspartate 103 coordinates Mg(2+). Residues glycine 140, glutamate 155, asparagine 170, and asparagine 228 each contribute to the UDP-N-acetyl-alpha-D-glucosamine site. Asparagine 228 serves as a coordination point for Mg(2+). Residues 231–251 are linker; sequence VALSQAEQFMKERINKRHMQN. An N-acetyltransferase region spans residues 252-456; sequence GVTLIDPMNT…DDYVKNIHKK (205 aa). Residues arginine 333 and lysine 351 each coordinate UDP-N-acetyl-alpha-D-glucosamine. The active-site Proton acceptor is the histidine 363. UDP-N-acetyl-alpha-D-glucosamine contacts are provided by tyrosine 366 and asparagine 377. Acetyl-CoA-binding positions include 386–387, alanine 423, and arginine 440; that span reads NY.

It in the N-terminal section; belongs to the N-acetylglucosamine-1-phosphate uridyltransferase family. In the C-terminal section; belongs to the transferase hexapeptide repeat family. As to quaternary structure, homotrimer. Mg(2+) serves as cofactor.

Its subcellular location is the cytoplasm. The enzyme catalyses alpha-D-glucosamine 1-phosphate + acetyl-CoA = N-acetyl-alpha-D-glucosamine 1-phosphate + CoA + H(+). The catalysed reaction is N-acetyl-alpha-D-glucosamine 1-phosphate + UTP + H(+) = UDP-N-acetyl-alpha-D-glucosamine + diphosphate. It participates in nucleotide-sugar biosynthesis; UDP-N-acetyl-alpha-D-glucosamine biosynthesis; N-acetyl-alpha-D-glucosamine 1-phosphate from alpha-D-glucosamine 6-phosphate (route II): step 2/2. The protein operates within nucleotide-sugar biosynthesis; UDP-N-acetyl-alpha-D-glucosamine biosynthesis; UDP-N-acetyl-alpha-D-glucosamine from N-acetyl-alpha-D-glucosamine 1-phosphate: step 1/1. It functions in the pathway bacterial outer membrane biogenesis; LPS lipid A biosynthesis. In terms of biological role, catalyzes the last two sequential reactions in the de novo biosynthetic pathway for UDP-N-acetylglucosamine (UDP-GlcNAc). The C-terminal domain catalyzes the transfer of acetyl group from acetyl coenzyme A to glucosamine-1-phosphate (GlcN-1-P) to produce N-acetylglucosamine-1-phosphate (GlcNAc-1-P), which is converted into UDP-GlcNAc by the transfer of uridine 5-monophosphate (from uridine 5-triphosphate), a reaction catalyzed by the N-terminal domain. The polypeptide is Bifunctional protein GlmU (Bacillus subtilis (strain 168)).